The sequence spans 303 residues: D-alanine--D-alanine ligase B (303 aa).

The 196-residue stretch at 103 to 298 (KLLWKGAGLP…YEDLCLKVLD (196 aa)) folds into the ATP-grasp domain. 129-184 (ERQLGLPIFVKPSTEGSSIGVTKVKQPGELRAAFEEARKYDKVVIAEQFIGGGEYT) is an ATP binding site. Mg(2+)-binding residues include Asp-252, Glu-265, and Asn-267.

This sequence belongs to the D-alanine--D-alanine ligase family. Requires Mg(2+) as cofactor. Mn(2+) is required as a cofactor.

The protein resides in the cytoplasm. It carries out the reaction 2 D-alanine + ATP = D-alanyl-D-alanine + ADP + phosphate + H(+). Its pathway is cell wall biogenesis; peptidoglycan biosynthesis. Cell wall formation. This Chromobacterium violaceum (strain ATCC 12472 / DSM 30191 / JCM 1249 / CCUG 213 / NBRC 12614 / NCIMB 9131 / NCTC 9757 / MK) protein is D-alanine--D-alanine ligase B.